A 160-amino-acid polypeptide reads, in one-letter code: Cytochrome b6-f complex subunit 4 (160 aa).

Helical transmembrane passes span leucine 36–valine 56, leucine 95–glutamate 115, and threonine 131–isoleucine 151.

Belongs to the cytochrome b family. PetD subfamily. The 4 large subunits of the cytochrome b6-f complex are cytochrome b6, subunit IV (17 kDa polypeptide, petD), cytochrome f and the Rieske protein, while the 4 small subunits are petG, petL, petM and petN. The complex functions as a dimer.

It localises to the plastid. It is found in the chloroplast thylakoid membrane. Component of the cytochrome b6-f complex, which mediates electron transfer between photosystem II (PSII) and photosystem I (PSI), cyclic electron flow around PSI, and state transitions. The sequence is that of Cytochrome b6-f complex subunit 4 from Spinacia oleracea (Spinach).